The following is a 928-amino-acid chain: Isoleucine--tRNA ligase (928 aa).

The 'HIGH' region motif lies at 57 to 67 (PFANGNIHMGH). Residue Glu554 participates in L-isoleucyl-5'-AMP binding. Residues 595-599 (KMSKS) carry the 'KMSKS' region motif. Lys598 provides a ligand contact to ATP. 4 residues coordinate Zn(2+): Cys887, Cys890, Cys907, and Cys910.

The protein belongs to the class-I aminoacyl-tRNA synthetase family. IleS type 1 subfamily. In terms of assembly, monomer. It depends on Zn(2+) as a cofactor.

It is found in the cytoplasm. It carries out the reaction tRNA(Ile) + L-isoleucine + ATP = L-isoleucyl-tRNA(Ile) + AMP + diphosphate. Functionally, catalyzes the attachment of isoleucine to tRNA(Ile). As IleRS can inadvertently accommodate and process structurally similar amino acids such as valine, to avoid such errors it has two additional distinct tRNA(Ile)-dependent editing activities. One activity is designated as 'pretransfer' editing and involves the hydrolysis of activated Val-AMP. The other activity is designated 'posttransfer' editing and involves deacylation of mischarged Val-tRNA(Ile). The chain is Isoleucine--tRNA ligase from Lactobacillus johnsonii (strain CNCM I-12250 / La1 / NCC 533).